Here is a 115-residue protein sequence, read N- to C-terminus: Large ribosomal subunit protein bL19 (115 aa).

It belongs to the bacterial ribosomal protein bL19 family.

Its function is as follows. This protein is located at the 30S-50S ribosomal subunit interface and may play a role in the structure and function of the aminoacyl-tRNA binding site. The polypeptide is Large ribosomal subunit protein bL19 (Clostridium tetani (strain Massachusetts / E88)).